A 234-amino-acid chain; its full sequence is Small ribosomal subunit protein uS3 (234 aa).

In terms of domain architecture, KH type-2 spans 39–107 (IRKFLKKELY…EVSINIKEVK (69 aa)).

The protein belongs to the universal ribosomal protein uS3 family. Part of the 30S ribosomal subunit. Forms a tight complex with proteins S10 and S14.

Its function is as follows. Binds the lower part of the 30S subunit head. Binds mRNA in the 70S ribosome, positioning it for translation. This is Small ribosomal subunit protein uS3 from Helicobacter pylori (strain P12).